Reading from the N-terminus, the 194-residue chain is Putative manganese efflux pump MntP (194 aa).

6 helical membrane passes run 3–23 (PFSIVLIGFAMSTDAFAAAIG), 37–57 (LRAGLIFGCIEAITPVIGWLL), 69–89 (DHWIAFVLLGALGTHMIVAGL), 110–132 (LGLATTGFATSIDAMAVGVSLAF), 147–167 (CTFSMVTAGVMLGRALGNLIG), and 172–192 (MLGGLILVIVGSVILYEHLSG).

Belongs to the MntP (TC 9.B.29) family.

It is found in the cell inner membrane. Its function is as follows. Probably functions as a manganese efflux pump. The polypeptide is Putative manganese efflux pump MntP (Xanthomonas euvesicatoria pv. vesicatoria (strain 85-10) (Xanthomonas campestris pv. vesicatoria)).